We begin with the raw amino-acid sequence, 262 residues long: Tryptophan synthase alpha chain (262 aa).

Catalysis depends on proton acceptor residues glutamate 48 and aspartate 59.

Belongs to the TrpA family. As to quaternary structure, tetramer of two alpha and two beta chains.

The enzyme catalyses (1S,2R)-1-C-(indol-3-yl)glycerol 3-phosphate + L-serine = D-glyceraldehyde 3-phosphate + L-tryptophan + H2O. It functions in the pathway amino-acid biosynthesis; L-tryptophan biosynthesis; L-tryptophan from chorismate: step 5/5. In terms of biological role, the alpha subunit is responsible for the aldol cleavage of indoleglycerol phosphate to indole and glyceraldehyde 3-phosphate. This is Tryptophan synthase alpha chain from Helicobacter pylori (strain P12).